The sequence spans 352 residues: Histidinol-phosphate aminotransferase (352 aa).

Position 210 is an N6-(pyridoxal phosphate)lysine (Lys210).

This sequence belongs to the class-II pyridoxal-phosphate-dependent aminotransferase family. Histidinol-phosphate aminotransferase subfamily. In terms of assembly, homodimer. It depends on pyridoxal 5'-phosphate as a cofactor.

The catalysed reaction is L-histidinol phosphate + 2-oxoglutarate = 3-(imidazol-4-yl)-2-oxopropyl phosphate + L-glutamate. The protein operates within amino-acid biosynthesis; L-histidine biosynthesis; L-histidine from 5-phospho-alpha-D-ribose 1-diphosphate: step 7/9. The chain is Histidinol-phosphate aminotransferase from Clostridium acetobutylicum (strain ATCC 824 / DSM 792 / JCM 1419 / IAM 19013 / LMG 5710 / NBRC 13948 / NRRL B-527 / VKM B-1787 / 2291 / W).